A 538-amino-acid chain; its full sequence is Phosphoenolpyruvate carboxykinase (ATP) (538 aa).

Positions 61, 195, and 201 each coordinate substrate. Residues K201, H220, and 236-244 (GLSGTGKTT) each bind ATP. Residues K201 and H220 each contribute to the Mn(2+) site. Residue D257 participates in Mn(2+) binding. The ATP site is built by E285, R323, and T449. R323 contacts substrate.

Belongs to the phosphoenolpyruvate carboxykinase (ATP) family. Mn(2+) serves as cofactor.

The protein localises to the cytoplasm. It catalyses the reaction oxaloacetate + ATP = phosphoenolpyruvate + ADP + CO2. Its pathway is carbohydrate biosynthesis; gluconeogenesis. Involved in the gluconeogenesis. Catalyzes the conversion of oxaloacetate (OAA) to phosphoenolpyruvate (PEP) through direct phosphoryl transfer between the nucleoside triphosphate and OAA. The chain is Phosphoenolpyruvate carboxykinase (ATP) from Bradyrhizobium diazoefficiens (strain JCM 10833 / BCRC 13528 / IAM 13628 / NBRC 14792 / USDA 110).